The primary structure comprises 142 residues: Transcriptional regulator MraZ (142 aa).

SpoVT-AbrB domains are found at residues 5-46 (THPV…DRSE) and 75-118 (AAAQ…DSEA).

This sequence belongs to the MraZ family. Forms oligomers.

It is found in the cytoplasm. It localises to the nucleoid. The protein is Transcriptional regulator MraZ of Tropheryma whipplei (strain TW08/27) (Whipple's bacillus).